The primary structure comprises 417 residues: UDP-N-acetylglucosamine 1-carboxyvinyltransferase (417 aa).

22-23 contributes to the phosphoenolpyruvate binding site; it reads KN. R93 serves as a coordination point for UDP-N-acetyl-alpha-D-glucosamine. Residue C117 is the Proton donor of the active site. C117 carries the 2-(S-cysteinyl)pyruvic acid O-phosphothioketal modification. UDP-N-acetyl-alpha-D-glucosamine-binding positions include 122–126, D304, and I326; that span reads RPVDQ.

It belongs to the EPSP synthase family. MurA subfamily.

The protein resides in the cytoplasm. It carries out the reaction phosphoenolpyruvate + UDP-N-acetyl-alpha-D-glucosamine = UDP-N-acetyl-3-O-(1-carboxyvinyl)-alpha-D-glucosamine + phosphate. Its pathway is cell wall biogenesis; peptidoglycan biosynthesis. Functionally, cell wall formation. Adds enolpyruvyl to UDP-N-acetylglucosamine. The sequence is that of UDP-N-acetylglucosamine 1-carboxyvinyltransferase from Laribacter hongkongensis (strain HLHK9).